The following is a 290-amino-acid chain: Nucleotide-binding protein LAR_0375 (290 aa).

Position 13 to 20 (13 to 20) interacts with ATP; it reads GMSGAGKT. GTP is bound at residue 63-66; the sequence is DMRS.

Belongs to the RapZ-like family.

Its function is as follows. Displays ATPase and GTPase activities. The sequence is that of Nucleotide-binding protein LAR_0375 from Limosilactobacillus reuteri subsp. reuteri (strain JCM 1112) (Lactobacillus reuteri).